Consider the following 135-residue polypeptide: MSFISEFKEFAMRGNVIDMAVGVVIGGAFGKIVSSLVGDIIMPVVGVVTGGVNFTDLKLTLKEAAEGAPAVTINYGSFIQTMVDFLIIAFCIFCVIKALNTLKNKLPKEEEAAPAEPEIPADIALLTEIRDLLKK.

Helical transmembrane passes span 10-30 (FAMR…GAFG) and 76-96 (GSFI…FCVI).

It belongs to the MscL family. Homopentamer.

The protein localises to the cell inner membrane. Functionally, channel that opens in response to stretch forces in the membrane lipid bilayer. May participate in the regulation of osmotic pressure changes within the cell. The sequence is that of Large-conductance mechanosensitive channel from Campylobacter concisus (strain 13826).